We begin with the raw amino-acid sequence, 398 residues long: Pheromone receptor transcription activator (398 aa).

3 disordered regions span residues 1–30, 101–125, and 254–317; these read MMDE…YLED, TDQN…ESGY, and PSTG…DRPP. Residues 20-74 form the MADS-box domain; the sequence is GSSQGNSYLEDRQKRQNTFTKRKAGIFKKANELALLTGSEVMVLVVSETGLVHTF. Over residues 106–121 the composition is skewed to low complexity; that stretch reads SQASQAKQSSAQLSDS. Polar residues-rich tracts occupy residues 262–273 and 282–294; these read TTGQHSVNSPPS and NKSF…PQTP.

It localises to the nucleus. Its function is as follows. In response to mating-pheromone signaling or nitrogen starvation, it interacts with mat1-Pc. This activates the expression of one of two mating-type-specific genes sxa2 or map3, which leads to inactivation of the P-factor. May also interact with mat1-Mc. The sequence is that of Pheromone receptor transcription activator (map1) from Schizosaccharomyces pombe (strain 972 / ATCC 24843) (Fission yeast).